The sequence spans 242 residues: Peroxisomal membrane protein 11-3 (242 aa).

A disordered region spans residues 1–22; the sequence is MAAAAAAAGSSDSRKPAAHPPP. At 1–102 the chain is on the cytoplasmic side; it reads MAAAAAAAGS…LRAHPHPPPA (102 aa). The chain crosses the membrane as a helical span at residues 103 to 123; it reads VALLAYGGEGVYYFLEQFVWL. Residues 124–214 lie on the Lumenal side of the membrane; it reads AKAGLLPAHL…MALGDVTDGK (91 aa). Residues 215–235 form a helical membrane-spanning segment; that stretch reads GLLGSSTLMASAGLLSALISA. The Cytoplasmic portion of the chain corresponds to 236–242; it reads HKNWNSC.

This sequence belongs to the peroxin-11 family. As to expression, expressed in seedlings, roots, leaf sheaths, spikelets and endosperm.

It localises to the peroxisome membrane. Its function is as follows. Involved in peroxisomal proliferation. The polypeptide is Peroxisomal membrane protein 11-3 (PEX11-3) (Oryza sativa subsp. japonica (Rice)).